The sequence spans 95 residues: Protein RnfH (95 aa).

The protein belongs to the UPF0125 (RnfH) family.

The chain is Protein RnfH from Erwinia tasmaniensis (strain DSM 17950 / CFBP 7177 / CIP 109463 / NCPPB 4357 / Et1/99).